Reading from the N-terminus, the 250-residue chain is Putative B3 domain-containing protein At4g03170 (250 aa).

The span at 1–12 (MANSTGKPTSST) shows a compositional bias: polar residues. The interval 1 to 90 (MANSTGKPTS…EKNQPKRFKK (90 aa)) is disordered. Over residues 34-56 (DREEDIDDEDDIDDEVIDDEDYE) the composition is skewed to acidic residues. Residues 72–84 (QSREREEETEKNQ) are compositionally biased toward basic and acidic residues. Positions 137 to 245 (KKQLMSSDVD…KLCFAIHYVK (109 aa)) form a DNA-binding region, TF-B3.

Its subcellular location is the nucleus. The protein is Putative B3 domain-containing protein At4g03170 of Arabidopsis thaliana (Mouse-ear cress).